A 621-amino-acid polypeptide reads, in one-letter code: uncharacterized protein (621 aa).

A phosphoserine mark is found at serine 269, serine 271, serine 274, serine 290, and serine 292. LRR repeat units lie at residues 333 to 354, 357 to 379, 380 to 401, 404 to 425, 426 to 447, and 451 to 472; these read QLLY…VFLS, SLVS…GELP, QLCS…YHIS, HLQI…ENVP, SLEK…RRLV, and NFEE…YRIT. The disordered stretch occupies residues 552–581; that stretch reads SKNASGGDTSSNVSLLNGSASEEIPQNTES.

It localises to the cytoplasm. It is found in the nucleus. The protein localises to the vacuole membrane. This is an uncharacterized protein from Schizosaccharomyces pombe (strain 972 / ATCC 24843) (Fission yeast).